The following is a 405-amino-acid chain: Dynactin subunit 2 (405 aa).

Positions 1–25 (MADPKYADLPGIARNEPDVYETSDL) are disordered. Alanine 2 carries the N-acetylalanine modification. Tyrosine 6 carries the post-translational modification Phosphotyrosine. Phosphoserine is present on serine 85. A Phosphotyrosine modification is found at tyrosine 88. A coiled-coil region spans residues 105–132 (YQRLLHEVQELTTEVEKIKMTVKESATE). Phosphothreonine is present on threonine 136. The interval 187 to 207 (KNTKGAGSGGKTTSGSPPDSS) is disordered. At serine 324 the chain carries Phosphoserine.

The protein belongs to the dynactin subunit 2 family. In terms of assembly, subunit of dynactin, a multiprotein complex part of a tripartite complex with dynein and a adapter, such as BICDL1, BICD2 or HOOK3. The dynactin complex is built around ACTR1A/ACTB filament and consists of an actin-related filament composed of a shoulder domain, a pointed end and a barbed end. Its length is defined by its flexible shoulder domain. The soulder is composed of 2 DCTN1 subunits, 4 DCTN2 and 2 DCTN3. The 4 DCNT2 (via N-terminus) bind the ACTR1A filament and act as molecular rulers to determine the length. The pointed end is important for binding dynein-dynactin cargo adapters and consists of 4 subunits: ACTR10, DCNT4, DCTN5 and DCTN6. The barbed end is composed of a CAPZA1:CAPZB heterodimers, which binds ACTR1A/ACTB filament and dynactin and stabilizes dynactin. Interacts with BICD2 and CEP135. Interacts with DYNAP. Interacts with ECPAS. Interacts with MAPRE1.

The protein resides in the cytoplasm. It localises to the cytoskeleton. It is found in the microtubule organizing center. Its subcellular location is the centrosome. The protein localises to the membrane. Functionally, part of the dynactin complex that activates the molecular motor dynein for ultra-processive transport along microtubules. In the dynactin soulder domain, binds the ACTR1A filament and acts as a molecular ruler to determine the length. Modulates cytoplasmic dynein binding to an organelle, and plays a role in prometaphase chromosome alignment and spindle organization during mitosis. Involved in anchoring microtubules to centrosomes. May play a role in synapse formation during brain development. In Sus scrofa (Pig), this protein is Dynactin subunit 2 (DCTN2).